The sequence spans 430 residues: Gamma-glutamyl phosphate reductase (430 aa).

It belongs to the gamma-glutamyl phosphate reductase family.

The protein resides in the cytoplasm. It carries out the reaction L-glutamate 5-semialdehyde + phosphate + NADP(+) = L-glutamyl 5-phosphate + NADPH + H(+). It participates in amino-acid biosynthesis; L-proline biosynthesis; L-glutamate 5-semialdehyde from L-glutamate: step 2/2. In terms of biological role, catalyzes the NADPH-dependent reduction of L-glutamate 5-phosphate into L-glutamate 5-semialdehyde and phosphate. The product spontaneously undergoes cyclization to form 1-pyrroline-5-carboxylate. In Methylococcus capsulatus (strain ATCC 33009 / NCIMB 11132 / Bath), this protein is Gamma-glutamyl phosphate reductase.